Reading from the N-terminus, the 480-residue chain is Iroquois-class homeodomain protein IRX-1 (480 aa).

The homeobox; TALE-type DNA-binding region spans 125–188 (YGDPGRPKNA…ANARRRLKKE (64 aa)). 3 disordered regions span residues 190–268 (KVTW…QGSP), 280–354 (SPLG…PLQH), and 401–480 (PHGP…LPSA). Positions 210–228 (TEGDPEKAEDDEEIDLESI) are enriched in acidic residues. Positions 229-239 (DIDKIDEHDGD) are enriched in basic and acidic residues. Serine 241 is modified (phosphoserine). Composition is skewed to low complexity over residues 252 to 262 (PHAPAAPSALA) and 340 to 351 (HPGAHGPSAGAP). Over residues 404-417 (PHLPAPPPPQPPVA) the composition is skewed to pro residues.

Belongs to the TALE/IRO homeobox family.

It is found in the nucleus. The polypeptide is Iroquois-class homeodomain protein IRX-1 (IRX1) (Homo sapiens (Human)).